A 40-amino-acid polypeptide reads, in one-letter code: Photosystem II reaction center protein Y (40 aa).

The chain crosses the membrane as a helical span at residues 5–23 (LIVVLAPILLAGGWAVFNI).

This sequence belongs to the PsbY family. PSII is composed of 1 copy each of membrane proteins PsbA, PsbB, PsbC, PsbD, PsbE, PsbF, PsbH, PsbI, PsbJ, PsbK, PsbL, PsbM, PsbT, PsbX, PsbY, PsbZ, Psb30/Ycf12, peripheral proteins PsbO, CyanoQ (PsbQ), PsbU, PsbV and a large number of cofactors. It forms dimeric complexes.

The protein localises to the cellular thylakoid membrane. Functionally, loosely associated component of the core of photosystem II (PSII), it is not always seen in crystals. PSII is a light-driven water plastoquinone oxidoreductase, using light energy to abstract electrons from H(2)O, generating a proton gradient subsequently used for ATP formation. This Synechococcus elongatus (strain ATCC 33912 / PCC 7942 / FACHB-805) (Anacystis nidulans R2) protein is Photosystem II reaction center protein Y.